The sequence spans 250 residues: Small ribosomal subunit protein uS3 (250 aa).

The region spanning 39 to 107 is the KH type-2 domain; that stretch reads VREFLTKKLK…PAQVSINEID (69 aa). The interval 215–250 is disordered; the sequence is MNPAPAEERPAKRGRGRGEGQERRGRRGDRAADKGE. The span at 220-250 shows a compositional bias: basic and acidic residues; it reads AEERPAKRGRGRGEGQERRGRRGDRAADKGE.

It belongs to the universal ribosomal protein uS3 family. As to quaternary structure, part of the 30S ribosomal subunit. Forms a tight complex with proteins S10 and S14.

Its function is as follows. Binds the lower part of the 30S subunit head. Binds mRNA in the 70S ribosome, positioning it for translation. This chain is Small ribosomal subunit protein uS3, found in Acinetobacter baumannii (strain AB307-0294).